Here is a 247-residue protein sequence, read N- to C-terminus: Adenosylcobinamide-GDP ribazoletransferase (247 aa).

The next 6 helical transmembrane spans lie at 34-54 (IVMF…IFIL), 59-79 (CGIP…TGGF), 113-133 (GGLA…ELAL), 138-158 (MLAA…LLMY), 171-193 (VFIG…IIAT), and 197-219 (PGMQ…GQLL).

The protein belongs to the CobS family. Mg(2+) is required as a cofactor.

The protein localises to the cell inner membrane. The enzyme catalyses alpha-ribazole + adenosylcob(III)inamide-GDP = adenosylcob(III)alamin + GMP + H(+). It catalyses the reaction alpha-ribazole 5'-phosphate + adenosylcob(III)inamide-GDP = adenosylcob(III)alamin 5'-phosphate + GMP + H(+). It participates in cofactor biosynthesis; adenosylcobalamin biosynthesis; adenosylcobalamin from cob(II)yrinate a,c-diamide: step 7/7. Its function is as follows. Joins adenosylcobinamide-GDP and alpha-ribazole to generate adenosylcobalamin (Ado-cobalamin). Also synthesizes adenosylcobalamin 5'-phosphate from adenosylcobinamide-GDP and alpha-ribazole 5'-phosphate. The polypeptide is Adenosylcobinamide-GDP ribazoletransferase (Salmonella newport (strain SL254)).